A 157-amino-acid polypeptide reads, in one-letter code: Ribosome maturation factor RimP (157 aa).

This sequence belongs to the RimP family.

The protein resides in the cytoplasm. Functionally, required for maturation of 30S ribosomal subunits. The protein is Ribosome maturation factor RimP of Thermobifida fusca (strain YX).